The following is a 310-amino-acid chain: Ribose-phosphate pyrophosphokinase (310 aa).

Residues 33 to 35 and 92 to 93 contribute to the ATP site; these read DGE and RQ. Mg(2+)-binding residues include histidine 127 and aspartate 166. Residue lysine 189 is part of the active site. Residues arginine 191, aspartate 215, and 219 to 223 contribute to the D-ribose 5-phosphate site; that span reads DTAGT.

Belongs to the ribose-phosphate pyrophosphokinase family. Class I subfamily. In terms of assembly, homohexamer. Mg(2+) is required as a cofactor.

The protein localises to the cytoplasm. The catalysed reaction is D-ribose 5-phosphate + ATP = 5-phospho-alpha-D-ribose 1-diphosphate + AMP + H(+). It functions in the pathway metabolic intermediate biosynthesis; 5-phospho-alpha-D-ribose 1-diphosphate biosynthesis; 5-phospho-alpha-D-ribose 1-diphosphate from D-ribose 5-phosphate (route I): step 1/1. In terms of biological role, involved in the biosynthesis of the central metabolite phospho-alpha-D-ribosyl-1-pyrophosphate (PRPP) via the transfer of pyrophosphoryl group from ATP to 1-hydroxyl of ribose-5-phosphate (Rib-5-P). The protein is Ribose-phosphate pyrophosphokinase of Bordetella parapertussis (strain 12822 / ATCC BAA-587 / NCTC 13253).